A 136-amino-acid chain; its full sequence is Probable disulfide formation protein (136 aa).

A helical membrane pass occupies residues 7-26; the sequence is NNALYFAWLICSTGTVMSIY. Residues Cys-36 and Cys-39 are joined by a disulfide bond. 2 helical membrane-spanning segments follow: residues 41–60 and 67–84; these read YQRI…TYRE and YALP…YQIC. Cysteines 96 and 101 form a disulfide. The chain crosses the membrane as a helical span at residues 109 to 133; it reads GFITVPMASALAFCAISCLLILSGS.

Belongs to the DsbB family. BdbC subfamily.

Its subcellular location is the cell inner membrane. Functionally, required for disulfide bond formation in some proteins. The sequence is that of Probable disulfide formation protein from Chlamydia caviae (strain ATCC VR-813 / DSM 19441 / 03DC25 / GPIC) (Chlamydophila caviae).